A 355-amino-acid chain; its full sequence is UDP-N-acetylglucosamine--N-acetylmuramyl-(pentapeptide) pyrophosphoryl-undecaprenol N-acetylglucosamine transferase (355 aa).

UDP-N-acetyl-alpha-D-glucosamine is bound by residues 13–15, asparagine 125, arginine 162, serine 190, isoleucine 244, and glutamine 289; that span reads TGG.

The protein belongs to the glycosyltransferase 28 family. MurG subfamily.

Its subcellular location is the cell inner membrane. The enzyme catalyses di-trans,octa-cis-undecaprenyl diphospho-N-acetyl-alpha-D-muramoyl-L-alanyl-D-glutamyl-meso-2,6-diaminopimeloyl-D-alanyl-D-alanine + UDP-N-acetyl-alpha-D-glucosamine = di-trans,octa-cis-undecaprenyl diphospho-[N-acetyl-alpha-D-glucosaminyl-(1-&gt;4)]-N-acetyl-alpha-D-muramoyl-L-alanyl-D-glutamyl-meso-2,6-diaminopimeloyl-D-alanyl-D-alanine + UDP + H(+). It functions in the pathway cell wall biogenesis; peptidoglycan biosynthesis. Its function is as follows. Cell wall formation. Catalyzes the transfer of a GlcNAc subunit on undecaprenyl-pyrophosphoryl-MurNAc-pentapeptide (lipid intermediate I) to form undecaprenyl-pyrophosphoryl-MurNAc-(pentapeptide)GlcNAc (lipid intermediate II). In Neisseria meningitidis serogroup C / serotype 2a (strain ATCC 700532 / DSM 15464 / FAM18), this protein is UDP-N-acetylglucosamine--N-acetylmuramyl-(pentapeptide) pyrophosphoryl-undecaprenol N-acetylglucosamine transferase.